The following is a 90-amino-acid chain: Cell division protein CrgA (90 aa).

Positions 1 to 25 (MPKARVTKNETAPVSSNPSANRTPV) are disordered. Polar residues predominate over residues 9–22 (NETAPVSSNPSANR). The next 2 helical transmembrane spans lie at 38–58 (VIMFAFMIVGLAWLIINYLVG) and 67–87 (LGAWNYGIGFGLMIIGLLMTM).

It belongs to the CrgA family.

It localises to the cell membrane. Involved in cell division. This chain is Cell division protein CrgA, found in Corynebacterium glutamicum (strain ATCC 13032 / DSM 20300 / JCM 1318 / BCRC 11384 / CCUG 27702 / LMG 3730 / NBRC 12168 / NCIMB 10025 / NRRL B-2784 / 534).